Reading from the N-terminus, the 308-residue chain is Oxygen-dependent coproporphyrinogen-III oxidase (308 aa).

Residue Ser92 coordinates substrate. Residues His96 and His106 each coordinate a divalent metal cation. His106 functions as the Proton donor in the catalytic mechanism. 108–110 (NVR) contacts substrate. His145 and His175 together coordinate a divalent metal cation. Residues 240–275 (YVEFNLVWDRGTLFGLQTGGRTESILMSMPPLVRWE) are important for dimerization. A substrate-binding site is contributed by 258–260 (GGR).

This sequence belongs to the aerobic coproporphyrinogen-III oxidase family. As to quaternary structure, homodimer. The cofactor is a divalent metal cation.

The protein resides in the cytoplasm. The enzyme catalyses coproporphyrinogen III + O2 + 2 H(+) = protoporphyrinogen IX + 2 CO2 + 2 H2O. The protein operates within porphyrin-containing compound metabolism; protoporphyrin-IX biosynthesis; protoporphyrinogen-IX from coproporphyrinogen-III (O2 route): step 1/1. In terms of biological role, involved in the heme biosynthesis. Catalyzes the aerobic oxidative decarboxylation of propionate groups of rings A and B of coproporphyrinogen-III to yield the vinyl groups in protoporphyrinogen-IX. In Salmonella paratyphi A (strain ATCC 9150 / SARB42), this protein is Oxygen-dependent coproporphyrinogen-III oxidase.